The primary structure comprises 496 residues: MGRRALLLLLLSFLAPWATIALRPALRALGSLHLPTNPTSLPAVAKNYSVLYFQQKVDHFGFNTVKTFNQRYLVADKYWKKNGGSILFYTGNEGDIIWFCNNTGFMWDVAEELKAMLVFAEHRYYGESLPFGDNSFKDSRHLNFLTSEQALADFAELIKHLKRTIPGAENQPVIAIGGSYGGMLAAWFRMKYPHMVVGALAASAPIWQFEDLVPCGVFMKIVTTDFRKSGPHCSESIHRSWDAINRLSNTGSGLQWLTGALHLCSPLTSQDIQHLKDWISETWVNLAMVDYPYASNFLQPLPAWPIKVVCQYLKNPNVSDSLLLQNIFQALNVYYNYSGQVKCLNISETATSSLGTLGWSYQACTEVVMPFCTNGVDDMFEPHSWNLKELSDDCFQQWGVRPRPSWITTMYGGKNISSHTNIVFSNGELDPWSGGGVTKDITDTLVAVTISEGAHHLDLRTKNALDPMSVLLARSLEVRHMKNWIRDFYDSAGKQH.

The first 21 residues, 1 to 21 (MGRRALLLLLLSFLAPWATIA), serve as a signal peptide directing secretion. A propeptide spanning residues 22-45 (LRPALRALGSLHLPTNPTSLPAVA) is cleaved from the precursor. N47 and N101 each carry an N-linked (GlcNAc...) asparagine glycan. The active-site Charge relay system is S179. An SKS domain region spans residues 194–334 (HMVVGALAAS…QNIFQALNVY (141 aa)). 4 disulfides stabilise this stretch: C215–C372, C233–C310, C264–C343, and C364–C394. 3 N-linked (GlcNAc...) asparagine glycosylation sites follow: N317, N336, and N345. The N-linked (GlcNAc...) asparagine glycan is linked to N415. Catalysis depends on charge relay system residues D430 and H455.

Belongs to the peptidase S28 family. In terms of assembly, homodimer. As to expression, highest levels in placenta, lung and liver. Also present in heart, brain, pancreas and kidney.

The protein resides in the lysosome. The enzyme catalyses Cleavage of a -Pro-|-Xaa bond to release a C-terminal amino acid.. Cleaves C-terminal amino acids linked to proline in peptides such as angiotensin II, III and des-Arg9-bradykinin. This cleavage occurs at acidic pH, but enzymatic activity is retained with some substrates at neutral pH. The protein is Lysosomal Pro-X carboxypeptidase (PRCP) of Homo sapiens (Human).